A 364-amino-acid polypeptide reads, in one-letter code: Heavy metal-associated isoprenylated plant protein 35 (364 aa).

The segment covering 1–12 (MATDEMKSETKK) has biased composition (basic and acidic residues). The tract at residues 1–33 (MATDEMKSETKKTEHKQKQSTQIKQDLPPPTIP) is disordered. In terms of domain architecture, HMA spans 39–102 (YKSCTLKVSI…KLNKAGKNAE (64 aa)). Residues C50 and C53 each coordinate a metal cation. A disordered region spans residues 101–265 (AEQLPEIPDP…PPTATDYDRP (165 aa)). Positions 111 to 122 (VDNKPKPVDPKE) are enriched in basic and acidic residues. Over residues 134-144 (QITNEATSSGI) the composition is skewed to polar residues. Basic and acidic residues-rich tracts occupy residues 154-169 (ECDKPESEKPVDEKCL) and 180-198 (VKEEKKDVLKEKDSGKEES). Residues 237 to 253 (SLATTNNPTDGPARTQS) are compositionally biased toward polar residues. C361 is subject to Cysteine methyl ester. C361 carries the S-farnesyl cysteine lipid modification. The propeptide at 362–364 (AIM) is removed in mature form.

The protein belongs to the HIPP family.

Functionally, heavy-metal-binding protein. This is Heavy metal-associated isoprenylated plant protein 35 from Arabidopsis thaliana (Mouse-ear cress).